A 129-amino-acid chain; its full sequence is Ribosome-binding factor A (129 aa).

Belongs to the RbfA family. Monomer. Binds 30S ribosomal subunits, but not 50S ribosomal subunits or 70S ribosomes.

It is found in the cytoplasm. Functionally, one of several proteins that assist in the late maturation steps of the functional core of the 30S ribosomal subunit. Associates with free 30S ribosomal subunits (but not with 30S subunits that are part of 70S ribosomes or polysomes). Required for efficient processing of 16S rRNA. May interact with the 5'-terminal helix region of 16S rRNA. The chain is Ribosome-binding factor A from Gloeobacter violaceus (strain ATCC 29082 / PCC 7421).